A 642-amino-acid polypeptide reads, in one-letter code: Probable serine/threonine-protein kinase drkA (642 aa).

The N-terminal stretch at 1 to 23 (MKKLPFLIIIIYIFLILISISSS) is a signal peptide. At 24–322 (IDYNYNNDID…KPTISLLKKY (299 aa)) the chain is on the extracellular side. Over residues 106 to 128 (SENSGSGSNSNSNSKNTDSSTGP) the composition is skewed to low complexity. The tract at residues 106 to 136 (SENSGSGSNSNSNSKNTDSSTGPTPSPISIN) is disordered. N-linked (GlcNAc...) asparagine glycans are attached at residues N136, N140, N158, N244, and N271. Residues 323–343 (LIIGFSIVGGLLIIGGCFLLI) form a helical membrane-spanning segment. The Cytoplasmic portion of the chain corresponds to 344-642 (RNRYRSSGYY…SDLQYVRQQL (299 aa)). Positions 374 to 627 (IKIGVRIGKG…EQCLERLESI (254 aa)) constitute a Protein kinase domain. ATP is bound by residues 380–388 (IGKGNYGEV) and K401. Catalysis depends on D497, which acts as the Proton acceptor.

This sequence belongs to the protein kinase superfamily. TKL Ser/Thr protein kinase family.

The protein localises to the membrane. It carries out the reaction L-seryl-[protein] + ATP = O-phospho-L-seryl-[protein] + ADP + H(+). The enzyme catalyses L-threonyl-[protein] + ATP = O-phospho-L-threonyl-[protein] + ADP + H(+). The polypeptide is Probable serine/threonine-protein kinase drkA (drkA) (Dictyostelium discoideum (Social amoeba)).